We begin with the raw amino-acid sequence, 595 residues long: uncharacterized protein (595 aa).

Residues 112 to 180 (VRPPGYDPES…KDVFGRALPT (69 aa)) form a disordered region. 2 stretches are compositionally biased toward basic and acidic residues: residues 120-133 (ESAKAAEYKDEKHK) and 161-174 (RTQERKKPRPKDVF). A CCHC-type; degenerate zinc finger spans residues 211–228 (VKCLRCGNFGHQSGDRDC). Disordered regions lie at residues 254 to 290 (HTDPSEPLKWELKQKPGLSPPRGGFDPDDPNQQIVAE) and 310 to 595 (KSMS…RRRN). The span at 256–267 (DPSEPLKWELKQ) shows a compositional bias: basic and acidic residues. 2 stretches are compositionally biased toward basic residues: residues 316–331 (KKRKSKKNKRHKKHSS) and 351–364 (RGSKKRKKLKKKSK). Basic and acidic residues-rich tracts occupy residues 414-428 (HYYDEKHQKRKEIVD), 470-539 (VSEK…HVYE), and 547-565 (FSDRYRSTKKTESDSESNR). Residues 584–595 (RKHRYSTNRRRN) are compositionally biased toward basic residues.

This is an uncharacterized protein from Arabidopsis thaliana (Mouse-ear cress).